Reading from the N-terminus, the 159-residue chain is Putative UPF0479 protein YDR545C-A (159 aa).

Transmembrane regions (helical) follow at residues 38 to 58 and 135 to 155; these read IVFCLPFFPALFLVPVQKVLQ and VPMIWLDVFQVFFVFLVISQH.

Belongs to the UPF0479 family.

The protein resides in the membrane. The polypeptide is Putative UPF0479 protein YDR545C-A (Saccharomyces cerevisiae (strain ATCC 204508 / S288c) (Baker's yeast)).